A 626-amino-acid polypeptide reads, in one-letter code: Bifurcating [FeFe] hydrogenase beta subunit (626 aa).

Position 198–201 (198–201 (GGGG)) interacts with NAD(+). FMN is bound by residues K207 and 224-228 (NGDEG). Position 229 (D229) interacts with NAD(+). Residues 312–317 (FVCGEE) and 350–352 (INN) contribute to the FMN site. Residues C485, C488, C491, C531, C578, C581, C584, C588, C608, C611, C614, and C618 each coordinate [4Fe-4S] cluster. 4Fe-4S ferredoxin-type domains lie at 569–598 (KKYVINPDICKGCGLCARSCPQNAITGERG) and 599–626 (KPYTIDQEKCVKCGLCASKCPFKAIELV).

The protein belongs to the complex I 51 kDa subunit family. Heterotrimer composed of HydA (alpha subunit), HydB (beta subunit) and HydC (gamma subunit). Near neutral and acidic pH conditions favor oligomerization of the heterotrimeric holoenzyme. [2Fe-2S] cluster serves as cofactor. [4Fe-4S] cluster is required as a cofactor. Requires FMN as cofactor.

The protein localises to the cytoplasm. The catalysed reaction is 2 H2 + 2 oxidized [2Fe-2S]-[ferredoxin] + NAD(+) = 2 reduced [2Fe-2S]-[ferredoxin] + NADH + 3 H(+). In terms of biological role, catalyzes the oxidation of the physiological electron carriers NADH and reduced ferredoxin, coupled to the production of H(2). Acts as a bifurcating [FeFe] hydrogenase, which uses the exergonic oxidation of reduced ferredoxin to drive the unfavorable oxidation of NADH to produce H(2). The beta subunit contains flavin- and NAD-binding sites and is potentially the site for NADH oxidation, with the subsequent shuttling of electrons to the alpha subunit. This chain is Bifurcating [FeFe] hydrogenase beta subunit, found in Thermotoga maritima (strain ATCC 43589 / DSM 3109 / JCM 10099 / NBRC 100826 / MSB8).